We begin with the raw amino-acid sequence, 309 residues long: Taste receptor type 2 member 43 (309 aa).

A topological domain (extracellular) is located at residue Met1. Residues 2-22 form a helical membrane-spanning segment; sequence ITFLPIIFSSLVVVTFVIGNF. Residues 23–46 are Cytoplasmic-facing; that stretch reads ANGFIALVNSIEWFKRQKISFADQ. Residues 47 to 67 form a helical membrane-spanning segment; sequence ILTALAVSRVGLLWVLLLNWY. The Extracellular segment spans residues 68–86; it reads STVLNPAFNSVEVRTTAYN. Residues 87-107 form a helical membrane-spanning segment; it reads IWAVINHFSNWLATSLSIFYL. Over 108–126 the chain is Cytoplasmic; sequence LKIANFSNFIFLHLKRRVK. A helical transmembrane segment spans residues 127-147; that stretch reads SVILVMLLGPLLFLACHLFVI. Residues 148 to 178 are Extracellular-facing; sequence NMNEIVRTKEFEGNMTWKIKLKSAMYFSNMT. Asn161 and Asn176 each carry an N-linked (GlcNAc...) asparagine glycan. The helical transmembrane segment at 179–199 threads the bilayer; it reads VTMVANLVPFTLTLLSFLLLI. Over 200–229 the chain is Cytoplasmic; that stretch reads CSLCKHLKKMQLHGKGSQDPSTKVHIKVLQ. A helical membrane pass occupies residues 230-250; it reads TVISFLLLCAIYFLSIMISVW. The Extracellular segment spans residues 251–259; the sequence is SFGSLKNKP. The chain crosses the membrane as a helical span at residues 260-280; it reads VFMFCKAMRFSYPSIHPFILI. The Cytoplasmic portion of the chain corresponds to 281 to 309; the sequence is WGNKKLKQTFLSVFWQMRYWVKGEKTSSP.

It belongs to the G-protein coupled receptor T2R family.

The protein localises to the membrane. It localises to the cell projection. Its subcellular location is the cilium membrane. In terms of biological role, gustducin-coupled receptor immplicated in the perception of bitter compounds in the oral cavity and the gastrointestinal tract. Signals through PLCB2 and the calcium-regulated cation channel TRPM5. Activated by the sulfonyl amide sweeteners saccharin and acesulfame K. In airway epithelial cells, binding of bitter compounds increases the intracellular calcium ion concentration and stimulates ciliary beat frequency. May act as chemosensory receptors in airway epithelial cells to detect and eliminate potential noxious agents from the airways. This is Taste receptor type 2 member 43 (TAS2R43) from Pan troglodytes (Chimpanzee).